Consider the following 74-residue polypeptide: uncharacterized protein (74 aa).

A helical membrane pass occupies residues 15–32 (FLHALTVTFLSDIFVWLV).

It is found in the membrane. This is an uncharacterized protein from Saccharomyces cerevisiae (strain ATCC 204508 / S288c) (Baker's yeast).